Here is a 201-residue protein sequence, read N- to C-terminus: 3-isopropylmalate dehydratase small subunit (201 aa).

This sequence belongs to the LeuD family. LeuD type 1 subfamily. In terms of assembly, heterodimer of LeuC and LeuD.

The catalysed reaction is (2R,3S)-3-isopropylmalate = (2S)-2-isopropylmalate. The protein operates within amino-acid biosynthesis; L-leucine biosynthesis; L-leucine from 3-methyl-2-oxobutanoate: step 2/4. In terms of biological role, catalyzes the isomerization between 2-isopropylmalate and 3-isopropylmalate, via the formation of 2-isopropylmaleate. In Roseobacter denitrificans (strain ATCC 33942 / OCh 114) (Erythrobacter sp. (strain OCh 114)), this protein is 3-isopropylmalate dehydratase small subunit.